A 572-amino-acid polypeptide reads, in one-letter code: Hemagglutinin-neuraminidase (572 aa).

The Intravirion segment spans residues 1–31 (MEYWKHTNHGKDAGNELETSMATHGNKLTNK). Residues 32 to 52 (ITYILWTIILVLLSIVFIIVL) form a helical membrane-spanning segment. Residues 53 to 572 (INSIKSEKAH…FKTEIPKSCS (520 aa)) are Virion surface-facing. 2 cysteine pairs are disulfide-bonded: Cys-190-Cys-214 and Cys-256-Cys-269. An involved in neuraminidase activity region spans residues 252-257 (NRKSCS). N-linked (GlcNAc...) asparagine; by host glycans are attached at residues Asn-308 and Asn-351. Intrachain disulfides connect Cys-355–Cys-469 and Cys-463–Cys-473. Asn-523 carries an N-linked (GlcNAc...) asparagine; by host glycan. Cys-535 and Cys-544 are disulfide-bonded.

The protein belongs to the paramyxoviruses hemagglutinin-neuraminidase family. As to quaternary structure, homotetramer; composed of disulfide-linked homodimers. Interacts with F protein trimer.

The protein resides in the virion membrane. It is found in the host cell membrane. The catalysed reaction is Hydrolysis of alpha-(2-&gt;3)-, alpha-(2-&gt;6)-, alpha-(2-&gt;8)- glycosidic linkages of terminal sialic acid residues in oligosaccharides, glycoproteins, glycolipids, colominic acid and synthetic substrates.. Attaches the virus to sialic acid-containing cell receptors and thereby initiating infection. Binding of HN protein to the receptor induces a conformational change that allows the F protein to trigger virion/cell membranes fusion. Functionally, neuraminidase activity ensures the efficient spread of the virus by dissociating the mature virions from the neuraminic acid containing glycoproteins. This chain is Hemagglutinin-neuraminidase (HN), found in Homo sapiens (Human).